The sequence spans 1275 residues: Inner capsid protein lambda-1 (1275 aa).

The segment covering 1–12 (MKRIPRKTRGKS) has biased composition (basic residues). A disordered region spans residues 1 to 147 (MKRIPRKTRG…NVDNEGGDNQ (147 aa)). Over residues 18 to 35 (DSTERADDGSAQLRDKQS) the composition is skewed to basic and acidic residues. Residues 55–66 (TRPSLQTVQKAT) are compositionally biased toward polar residues. Basic and acidic residues-rich tracts occupy residues 80–98 (AVDKKGNTKGDKTNEHVEA) and 105–117 (ATKRQAKDTDKQK). The span at 118–139 (AQVTYNDTGINNANELSRSGNV) shows a compositional bias: polar residues. The segment at 181-203 (YQCHVCSAVLFSPLDLDAHVASH) adopts a C2H2-type zinc-finger fold.

The protein belongs to the turreted BTV-fold inner capsid family. As to quaternary structure, homodecamer; each decamer is made up of two conformers of VP2, called VP2A and VP2B. 12 homodecamers assemble to form an icosahedral capsid. Interacts with protein mu-NS; in viral inclusions. Mg(2+) is required as a cofactor. Mn(2+) serves as cofactor.

It localises to the virion. It catalyses the reaction ATP + H2O = ADP + phosphate + H(+). Inner capsid protein that self-assembles to form an icosahedral capsid with a T=2 symmetry, which consists of 120 copies of VP2, with channels at each of its five-fold vertices. This capsid constitutes the innermost concentric layer of the viral mature particle. In terms of biological role, displays NTPase, RNA 5'-triphosphatase (RTPase) and RNA helicase activities and probably participates in transcription of the viral genome. Helicase activity might be involved in unwinding or reannealing dsRNA during RNA synthesis. RTPase enzymatic activity represents the first step in RNA capping, which yields a 5'-diphosphorylated plus-strand RNA. The sequence is that of Inner capsid protein lambda-1 from Reovirus type 2 (strain D5/Jones) (T2J).